Here is a 74-residue protein sequence, read N- to C-terminus: NAD(P)H-quinone oxidoreductase subunit L (74 aa).

Transmembrane regions (helical) follow at residues 5 to 25 (LIIAALYLALAGAYLLVVPAA) and 43 to 63 (AFMYFLVFFFFPGLLLLAPLL).

It belongs to the complex I NdhL subunit family. In terms of assembly, NDH-1 can be composed of about 15 different subunits; different subcomplexes with different compositions have been identified which probably have different functions.

It localises to the cellular thylakoid membrane. The enzyme catalyses a plastoquinone + NADH + (n+1) H(+)(in) = a plastoquinol + NAD(+) + n H(+)(out). The catalysed reaction is a plastoquinone + NADPH + (n+1) H(+)(in) = a plastoquinol + NADP(+) + n H(+)(out). Functionally, NDH-1 shuttles electrons from an unknown electron donor, via FMN and iron-sulfur (Fe-S) centers, to quinones in the respiratory and/or the photosynthetic chain. The immediate electron acceptor for the enzyme in this species is believed to be plastoquinone. Couples the redox reaction to proton translocation, and thus conserves the redox energy in a proton gradient. Cyanobacterial NDH-1 also plays a role in inorganic carbon-concentration. The chain is NAD(P)H-quinone oxidoreductase subunit L from Synechococcus elongatus (strain ATCC 33912 / PCC 7942 / FACHB-805) (Anacystis nidulans R2).